The following is an 809-amino-acid chain: Endoplasmin homolog (809 aa).

The signal sequence occupies residues M1–T18. Residues N111, D155, N168, and F200 each coordinate ATP. A glycan (N-linked (GlcNAc...) asparagine) is linked at N111. Positions V293–E320 are enriched in acidic residues. The segment at V293–V329 is disordered. N-linked (GlcNAc...) asparagine glycans are attached at residues N410, N450, and N617. The segment at S766 to L809 is disordered. Residues A774–E788 show a composition bias toward acidic residues. Residues K789–L809 are compositionally biased toward basic and acidic residues. The Prevents secretion from ER motif lies at K806–L809.

Belongs to the heat shock protein 90 family.

Its subcellular location is the endoplasmic reticulum lumen. Functionally, may have a molecular chaperone role in the processing of secreted materials. This is Endoplasmin homolog from Hordeum vulgare (Barley).